The sequence spans 316 residues: Coproporphyrin III ferrochelatase (316 aa).

Fe-coproporphyrin III is bound by residues tyrosine 13, arginine 30, 46 to 47 (RY), serine 54, and tyrosine 125. 2 residues coordinate Fe(2+): histidine 183 and glutamate 264.

The protein belongs to the ferrochelatase family.

The protein localises to the cytoplasm. It catalyses the reaction Fe-coproporphyrin III + 2 H(+) = coproporphyrin III + Fe(2+). It functions in the pathway porphyrin-containing compound metabolism; protoheme biosynthesis. In terms of biological role, involved in coproporphyrin-dependent heme b biosynthesis. Catalyzes the insertion of ferrous iron into coproporphyrin III to form Fe-coproporphyrin III. The chain is Coproporphyrin III ferrochelatase from Geobacillus kaustophilus (strain HTA426).